The chain runs to 239 residues: Protein NtpR (239 aa).

A Glutamine amidotransferase type-1 domain is found at 12 to 239 (LIRATDTFQG…GLFDFFVQEF (228 aa)). Residue C113 is the Nucleophile of the active site. Active-site residues include H217 and E219.

The protein is Protein NtpR (ntpR) of Enterococcus hirae (strain ATCC 9790 / DSM 20160 / JCM 8729 / LMG 6399 / NBRC 3181 / NCIMB 6459 / NCDO 1258 / NCTC 12367 / WDCM 00089 / R).